A 120-amino-acid chain; its full sequence is Phosphoribosyl-AMP cyclohydrolase (120 aa).

D75 contacts Mg(2+). A Zn(2+)-binding site is contributed by C76. Residues D77 and D79 each contribute to the Mg(2+) site. Residues C92 and C99 each coordinate Zn(2+).

It belongs to the PRA-CH family. As to quaternary structure, homodimer. The cofactor is Mg(2+). Requires Zn(2+) as cofactor.

It localises to the cytoplasm. It catalyses the reaction 1-(5-phospho-beta-D-ribosyl)-5'-AMP + H2O = 1-(5-phospho-beta-D-ribosyl)-5-[(5-phospho-beta-D-ribosylamino)methylideneamino]imidazole-4-carboxamide. The protein operates within amino-acid biosynthesis; L-histidine biosynthesis; L-histidine from 5-phospho-alpha-D-ribose 1-diphosphate: step 3/9. Its function is as follows. Catalyzes the hydrolysis of the adenine ring of phosphoribosyl-AMP. This is Phosphoribosyl-AMP cyclohydrolase from Haloarcula marismortui (strain ATCC 43049 / DSM 3752 / JCM 8966 / VKM B-1809) (Halobacterium marismortui).